We begin with the raw amino-acid sequence, 284 residues long: NAD(P)H-hydrate epimerase (284 aa).

The N-terminal 55 residues, 1–55 (MSGLRTLLGLGLLVSSSRFPRVVARGGPRCPGPAWWAARPMHLGDSTMAGGTVKY), are a transit peptide targeting the mitochondrion. The region spanning 61–271 (AQAVDEELFN…DLEKKYQLNL (211 aa)) is the YjeF N-terminal domain. 115-119 (NNGGD) contributes to the (6S)-NADPHX binding site. Position 116 (Asn116) interacts with K(+). Position 140 is an N6-succinyllysine (Lys140). Asp181 is a binding site for K(+). (6S)-NADPHX-binding positions include 185–191 (GFSFKGA) and Asp214. Ser217 contacts K(+).

The protein belongs to the NnrE/AIBP family. As to quaternary structure, homodimer. Interacts with APOA1 and APOA2. K(+) serves as cofactor. Post-translationally, undergoes physiological phosphorylation during sperm capacitation, downstream to PKA activation.

The protein resides in the mitochondrion. The protein localises to the secreted. The catalysed reaction is (6R)-NADHX = (6S)-NADHX. It carries out the reaction (6R)-NADPHX = (6S)-NADPHX. Catalyzes the epimerization of the S- and R-forms of NAD(P)HX, a damaged form of NAD(P)H that is a result of enzymatic or heat-dependent hydration. This is a prerequisite for the S-specific NAD(P)H-hydrate dehydratase to allow the repair of both epimers of NAD(P)HX. Accelerates cholesterol efflux from endothelial cells to high-density lipoprotein (HDL) and thereby regulates angiogenesis. The protein is NAD(P)H-hydrate epimerase of Monodelphis domestica (Gray short-tailed opossum).